The chain runs to 434 residues: Zinc finger CCCH domain-containing protein 10 (434 aa).

The disordered stretch occupies residues 1–37; that stretch reads MPDRDSYANGTGSSGGGPGGGGSEEASGAGVGSGGAS. Positions 12–35 are enriched in gly residues; the sequence is GSSGGGPGGGGSEEASGAGVGSGG. 3 C3H1-type zinc fingers span residues 36–63, 73–99, and 134–161; these read ASSD…HPDM, KNEF…HGSK, and KEEV…HLQR. Omega-N-methylarginine is present on residues arginine 185 and arginine 186. Residues 196–207 are compositionally biased toward basic and acidic residues; sequence PDRGFEDHEPGP. Residues 196 to 217 are disordered; the sequence is PDRGFEDHEPGPKRRRGGCCPP. Residues 234 to 280 adopt a coiled-coil conformation; it reads GVECRLLEEENAMLRKRVEELKKQVSNLLATNEVLLEQNAQFRNQAK. The span at 314 to 330 shows a compositional bias: polar residues; the sequence is TTLSSQALQPRPVSQQE. The segment at 314–362 is disordered; it reads TTLSSQALQPRPVSQQELVAPAGAPAAPPTNAAPPAAPPPPPPHLTPEI. The segment covering 339–358 has biased composition (pro residues); it reads AAPPTNAAPPAAPPPPPPHL.

It localises to the nucleus. In terms of biological role, specific regulator of miRNA biogenesis. Binds, via the C3H1-type zinc finger domains, to the binding motif 5'-GCAGCGC-3' on microRNA pri-MIR143 and negatively regulates the processing to mature microRNA. In Homo sapiens (Human), this protein is Zinc finger CCCH domain-containing protein 10 (ZC3H10).